Consider the following 292-residue polypeptide: Pantothenate synthetase (292 aa).

32–39 (MGFLHEGH) provides a ligand contact to ATP. Histidine 39 serves as the catalytic Proton donor. Glutamine 63 provides a ligand contact to (R)-pantoate. Glutamine 63 serves as a coordination point for beta-alanine. 150–153 (GEKD) contacts ATP. A (R)-pantoate-binding site is contributed by glutamine 156. ATP is bound by residues valine 179 and 187–190 (MSSR).

The protein belongs to the pantothenate synthetase family. In terms of assembly, homodimer.

It localises to the cytoplasm. The enzyme catalyses (R)-pantoate + beta-alanine + ATP = (R)-pantothenate + AMP + diphosphate + H(+). Its pathway is cofactor biosynthesis; (R)-pantothenate biosynthesis; (R)-pantothenate from (R)-pantoate and beta-alanine: step 1/1. Functionally, catalyzes the condensation of pantoate with beta-alanine in an ATP-dependent reaction via a pantoyl-adenylate intermediate. This Myxococcus xanthus (strain DK1622) protein is Pantothenate synthetase.